Consider the following 520-residue polypeptide: GMP synthase [glutamine-hydrolyzing] (520 aa).

Residues 12-205 (KIIVLDYGSQ…AISICGARGD (194 aa)) form the Glutamine amidotransferase type-1 domain. Cysteine 89 serves as the catalytic Nucleophile. Residues histidine 179 and glutamate 181 contribute to the active site. The GMPS ATP-PPase domain occupies 206–395 (WSMDNFIDME…LGMPEEIVWR (190 aa)). 233–239 (SGGVDSS) is an ATP binding site.

As to quaternary structure, homodimer.

The enzyme catalyses XMP + L-glutamine + ATP + H2O = GMP + L-glutamate + AMP + diphosphate + 2 H(+). The protein operates within purine metabolism; GMP biosynthesis; GMP from XMP (L-Gln route): step 1/1. Catalyzes the synthesis of GMP from XMP. The protein is GMP synthase [glutamine-hydrolyzing] of Streptococcus pyogenes serotype M2 (strain MGAS10270).